We begin with the raw amino-acid sequence, 385 residues long: Putative actin-25 (385 aa).

It belongs to the actin family.

The protein resides in the cytoplasm. Its subcellular location is the cytoskeleton. It catalyses the reaction ATP + H2O = ADP + phosphate + H(+). In terms of biological role, actins are highly conserved proteins that are involved in various types of cell motility and are ubiquitously expressed in all eukaryotic cells. Multiple isoforms are involved in various cellular functions such as cytoskeleton structure, cell mobility, chromosome movement and muscle contraction. This Dictyostelium discoideum (Social amoeba) protein is Putative actin-25 (act25).